The sequence spans 388 residues: Tetratricopeptide repeat protein 4 (388 aa).

Methionine 1 bears the N-acetylmethionine mark. Serine 51 bears the Phosphoserine mark. TPR repeat units lie at residues 79–112, 117–150, and 151–184; these read ARTY…KCAD, AVLY…KPCH, and LKAI…DATE. Phosphoserine is present on serine 244.

It belongs to the TTC4 family. Interacts (via TPR repeats) with HSP90AB1. Interacts with HSPA8, CDC6, TBK1 and MSL1.

The protein localises to the nucleus. Its subcellular location is the nucleoplasm. It localises to the cytoplasm. In terms of biological role, may act as a co-chaperone for HSP90AB1. In Bos taurus (Bovine), this protein is Tetratricopeptide repeat protein 4 (TTC4).